The primary structure comprises 320 residues: Malate dehydrogenase 2 (320 aa).

NAD(+)-binding positions include 10–15 and D34; that span reads GAGQIG. Residues R83 and R89 each contribute to the substrate site. Residues N96 and 119-121 each bind NAD(+); that span reads ITN. Residues N121 and R152 each contribute to the substrate site. H176 functions as the Proton acceptor in the catalytic mechanism.

It belongs to the LDH/MDH superfamily. MDH type 3 family.

The enzyme catalyses (S)-malate + NAD(+) = oxaloacetate + NADH + H(+). In terms of biological role, catalyzes the reversible oxidation of malate to oxaloacetate. This chain is Malate dehydrogenase 2, found in Rhodopseudomonas palustris (strain BisB18).